A 2343-amino-acid polypeptide reads, in one-letter code: Coagulation factor VIII (2343 aa).

The N-terminal stretch at Met1–Ser19 is a signal peptide. 2 Plastocyanin-like domains span residues Ala20–Cys199 and Glu207–Cys343. The region spanning Ala20–Cys343 is the F5/8 type A 1 domain. 2 N-linked (GlcNAc...) asparagine glycosylation sites follow: Asn233 and Asn253. 2 positions are modified to sulfotyrosine: Tyr359 and Tyr408. Plastocyanin-like domains are found at residues Lys393–Cys567 and Asn577–Cys724. The F5/8 type A 2 domain maps to Lys393–Cys724. Asn595 is a glycosylation site (N-linked (GlcNAc...) asparagine). Sulfotyrosine occurs at positions 731, 732, and 736. Polar residues predominate over residues Pro752–His761. Disordered stretches follow at residues Pro752 to Thr774 and Ala828 to Glu865. Residues Ser754–Arg1659 are b. 2 stretches are compositionally biased toward basic and acidic residues: residues Ala828 to Gly841 and Pro850 to Thr861. N-linked (GlcNAc...) asparagine glycans are attached at residues Asn877, Asn921, Asn937, Asn938, Asn956, Asn1007, Asn1019, Asn1037, Asn1062, Asn1069, and Asn1080. Residues Gly1124–Ser1147 form a disordered region. The span at Lys1125–Ser1147 shows a compositional bias: polar residues. N-linked (GlcNAc...) asparagine glycosylation is found at Asn1179, Asn1193, Asn1275, Asn1290, Asn1308, Asn1341, Asn1391, Asn1419, Asn1429, Asn1453, Asn1547, and Asn1618. Residues Thr1302–Ile1314 are compositionally biased toward polar residues. Positions Thr1302–Arg1326 are disordered. Positions Lys1592 to Gln1632 are disordered. Sulfotyrosine occurs at positions 1675 and 1691. 2 Plastocyanin-like domains span residues Lys1705–Cys1869 and Gly1879–Cys2032. The 328-residue stretch at Lys1705–Cys2032 folds into the F5/8 type A 3 domain. Residue Asn1821 is glycosylated (N-linked (GlcNAc...) asparagine). F5/8 type C domains are found at residues Cys2032–Cys2180 and Cys2185–Cys2337. Cystine bridges form between Cys2032–Cys2180 and Cys2185–Cys2337. N-linked (GlcNAc...) asparagine glycosylation is found at Asn2129 and Asn2281.

This sequence belongs to the multicopper oxidase family. In terms of assembly, interacts with vWF. vWF binding is essential for the stabilization of F8 in circulation. Post-translationally, proteolytically cleaved by cathepsin CTSG to produce a partially activated form.

It is found in the secreted. It localises to the extracellular space. In terms of biological role, factor VIII, along with calcium and phospholipid, acts as a cofactor for factor IXa when it converts factor X to the activated form, factor Xa. The sequence is that of Coagulation factor VIII (F8) from Canis lupus familiaris (Dog).